A 469-amino-acid polypeptide reads, in one-letter code: Ribosomal protein uS12 methylthiotransferase RimO (469 aa).

The MTTase N-terminal domain maps to 34 to 144; it reads NKIGFVSLGC…VLEHVHQFAP (111 aa). The [4Fe-4S] cluster site is built by Cys43, Cys79, Cys108, Cys176, Cys180, and Cys183. The 238-residue stretch at 162-399 folds into the Radical SAM core domain; that stretch reads LTPKHYAYLK…MLVQQEISAA (238 aa). Residues 402 to 468 enclose the TRAM domain; it reads QKRIGSTMKV…EYDLWGSLVR (67 aa).

This sequence belongs to the methylthiotransferase family. RimO subfamily. [4Fe-4S] cluster serves as cofactor.

Its subcellular location is the cytoplasm. It carries out the reaction L-aspartate(89)-[ribosomal protein uS12]-hydrogen + (sulfur carrier)-SH + AH2 + 2 S-adenosyl-L-methionine = 3-methylsulfanyl-L-aspartate(89)-[ribosomal protein uS12]-hydrogen + (sulfur carrier)-H + 5'-deoxyadenosine + L-methionine + A + S-adenosyl-L-homocysteine + 2 H(+). Its function is as follows. Catalyzes the methylthiolation of an aspartic acid residue of ribosomal protein uS12. This chain is Ribosomal protein uS12 methylthiotransferase RimO, found in Vibrio vulnificus (strain CMCP6).